The following is a 469-amino-acid chain: 3-isopropylmalate dehydratase large subunit (469 aa).

3 residues coordinate [4Fe-4S] cluster: C350, C410, and C413.

The protein belongs to the aconitase/IPM isomerase family. LeuC type 1 subfamily. Heterodimer of LeuC and LeuD. [4Fe-4S] cluster serves as cofactor.

It carries out the reaction (2R,3S)-3-isopropylmalate = (2S)-2-isopropylmalate. It functions in the pathway amino-acid biosynthesis; L-leucine biosynthesis; L-leucine from 3-methyl-2-oxobutanoate: step 2/4. Its function is as follows. Catalyzes the isomerization between 2-isopropylmalate and 3-isopropylmalate, via the formation of 2-isopropylmaleate. This is 3-isopropylmalate dehydratase large subunit from Rhizobium rhizogenes (strain K84 / ATCC BAA-868) (Agrobacterium radiobacter).